A 125-amino-acid chain; its full sequence is MAKPSYVKFDVPPELAEKALEALKKAKETGKIRKGTNEATKAIERGQAKLVLIAEDVQPEEIVAHLPPLCEEKKIPYIYVPTKKGIGEACGLQVGAAAAAILDPGQGKDVLDEVIKRVSELTGKS.

This sequence belongs to the eukaryotic ribosomal protein eL8 family. As to quaternary structure, part of the 50S ribosomal subunit. Probably part of the RNase P complex.

The protein resides in the cytoplasm. Functionally, multifunctional RNA-binding protein that recognizes the K-turn motif in ribosomal RNA, the RNA component of RNase P, box H/ACA, box C/D and box C'/D' sRNAs. This chain is Large ribosomal subunit protein eL8, found in Metallosphaera sedula (strain ATCC 51363 / DSM 5348 / JCM 9185 / NBRC 15509 / TH2).